The primary structure comprises 314 residues: DNA-directed RNA polymerase subunit alpha (314 aa).

Residues 1–228 (MIEIEKPRIE…EHLNIFVGLT (228 aa)) are alpha N-terminal domain (alpha-NTD). The segment at 246–314 (EKVLEMSIEE…DLGLGLRKED (69 aa)) is alpha C-terminal domain (alpha-CTD).

The protein belongs to the RNA polymerase alpha chain family. In terms of assembly, homodimer. The RNAP catalytic core consists of 2 alpha, 1 beta, 1 beta' and 1 omega subunit. When a sigma factor is associated with the core the holoenzyme is formed, which can initiate transcription.

The catalysed reaction is RNA(n) + a ribonucleoside 5'-triphosphate = RNA(n+1) + diphosphate. DNA-dependent RNA polymerase catalyzes the transcription of DNA into RNA using the four ribonucleoside triphosphates as substrates. This is DNA-directed RNA polymerase subunit alpha from Staphylococcus aureus (strain Mu3 / ATCC 700698).